The primary structure comprises 668 residues: MYIINLILPLIGSIITGLFGHKLGNKLSIQIAVGCMMLTALSSLYIGYEILLCNSVVHFKLSTWMQVGSLNVEYGLLYDSLTSIMIIVITCISSMVHLYSMDYMKADPHKTRFFSYLSLFTFFMMLLVTADNFVQLFFGWEGVGIMSYLLINFWYTRLQANKSALKAVILNRFGDFGLFFGILLVFLVFKSVDFSVIFTVAPFITEYTINLLGYEVNAITLIGSFIVIGVVGKSAQLGLHMWLPDAMEGPTPVSALLHAATMVTAGVFLVLRTSPLLSYSITILNILTIIGALTTLFATTIGIVQNDIKRVIAYSTCSQLGYMIFACGLLNYNASIYHLTTHAFFKALLFLSAGSVIHGLNDEQDMRKMGGLVNLMPLTYQCMLIGTLALTGFPFLSGYYSKDIILETSYATYYWEGTFAAIIGYVAAFGTTFYSFRLLILTFFNKPRMQYKTIAGVHEASTNMVIPLVILAICSIFIGYLTKDLFVGLGTPIWNNSFFAYPYNNLILESEVLQRELKLLPLFAFIYGVLTPVLFYFNLKEDRMVHLIKNPIAKESYFFFVKKWYFDFLSRVLIAVPFFHLSYDVMNKDLDKGLWEQIGVTGVATALVNEFTEFKLNNEITLSTYISYIVQAILLIIFVGIFSFMIGFLYVELFVILGALYLCLPKIK.

The next 18 helical transmembrane spans lie at 1–21 (MYII…LFGH), 31–51 (IAVG…YEIL), 81–101 (LTSI…LYSM), 111–131 (TRFF…VTAD), 133–153 (FVQL…LINF), 178–198 (LFFG…SVIF), 211–231 (LLGY…IGVV), 251–271 (TPVS…FLVL), 283–303 (ILNI…TIGI), 311–331 (VIAY…GLLN), 339–359 (LTTH…VIHG), 375–395 (LMPL…GFPF), 421–441 (AIIG…LLIL), 462–482 (TNMV…GYLT), 519–539 (LLPL…YFNL), 566–586 (FDFL…YDVM), 629–649 (IVQA…IGFL), and 650–668 (YVEL…PKIK).

Belongs to the complex I subunit 5 family.

Its subcellular location is the mitochondrion inner membrane. The enzyme catalyses a ubiquinone + NADH + 5 H(+)(in) = a ubiquinol + NAD(+) + 4 H(+)(out). Functionally, core subunit of the mitochondrial membrane respiratory chain NADH dehydrogenase (Complex I) that is believed to belong to the minimal assembly required for catalysis. Complex I functions in the transfer of electrons from NADH to the respiratory chain. The immediate electron acceptor for the enzyme is believed to be ubiquinone. This Dictyostelium citrinum (Slime mold) protein is NADH-ubiquinone oxidoreductase chain 5 (nad5).